The sequence spans 596 residues: Elongation factor 4 (596 aa).

Residues 2 to 183 (KNIRNFSIIA…AIVDRIPAPV (182 aa)) enclose the tr-type G domain. GTP-binding positions include 14 to 19 (DHGKST) and 130 to 133 (NKID).

This sequence belongs to the TRAFAC class translation factor GTPase superfamily. Classic translation factor GTPase family. LepA subfamily.

It is found in the cell inner membrane. The enzyme catalyses GTP + H2O = GDP + phosphate + H(+). Required for accurate and efficient protein synthesis under certain stress conditions. May act as a fidelity factor of the translation reaction, by catalyzing a one-codon backward translocation of tRNAs on improperly translocated ribosomes. Back-translocation proceeds from a post-translocation (POST) complex to a pre-translocation (PRE) complex, thus giving elongation factor G a second chance to translocate the tRNAs correctly. Binds to ribosomes in a GTP-dependent manner. In Sulfurimonas denitrificans (strain ATCC 33889 / DSM 1251) (Thiomicrospira denitrificans (strain ATCC 33889 / DSM 1251)), this protein is Elongation factor 4.